The primary structure comprises 475 residues: Putative histidine permease (475 aa).

A run of 12 helical transmembrane segments spans residues 20–40 (LFMISLGGVIGTGLFLSTGYT), 44–64 (AGPGGTILAYVIGGLMMYLVM), 87–107 (FIGPSTGFMVGIMYWINWVVT), 127–147 (SVWMWSAIFAALLFICNAFSV), 162–182 (IVTIILFIILGGAAMFGLISL), 199–219 (GLFPNGFLAVFIAMISVSFAF), 246–266 (VAWRTVIFFIGAVFILSGLIS), 277–297 (FVAVFAEIGIPYAADIMNFVI), 341–361 (ALMISMAVSCLSLVSSIVAPG), 363–383 (VYVVMVAIAGFAGVVVWMSIA), 410–430 (YPLMPIAALLLCSASCIGLAF), and 434–454 (QRIALFCGVPCIILCYLIYHF).

Belongs to the amino acid-polyamine-organocation (APC) superfamily.

The protein localises to the cell membrane. This is Putative histidine permease (hutM) from Bacillus subtilis (strain 168).